Reading from the N-terminus, the 214-residue chain is MITAEMVKELRERTGAGMMDCKRALVETNGDIEKAIDELRTKGLAKAAKKAGRVASEGVVTSYIHGGGRIGVLVEVNCETDFVAKTNDFKQLAYDIAMQIAASNPEYLNREEVPQEVINREKEILKAQALEEGKPEKVIEKMVEGRVEKFFKERCLLEQAFIKDLDKSVQELINENIARMGENITIRRFARYEVGEGIEKESCDFASEVMSQLK.

The segment at 80-83 (TDFV) is involved in Mg(2+) ion dislocation from EF-Tu.

The protein belongs to the EF-Ts family.

The protein localises to the cytoplasm. In terms of biological role, associates with the EF-Tu.GDP complex and induces the exchange of GDP to GTP. It remains bound to the aminoacyl-tRNA.EF-Tu.GTP complex up to the GTP hydrolysis stage on the ribosome. The sequence is that of Elongation factor Ts from Syntrophomonas wolfei subsp. wolfei (strain DSM 2245B / Goettingen).